The sequence spans 1023 residues: Exportin-T (1023 aa).

It belongs to the exportin family.

The protein resides in the nucleus. It localises to the cytoplasm. In terms of biological role, tRNA nucleus export receptor which facilitates tRNA translocation across the nuclear pore complex. Involved in pre-tRNA splicing, probably by affecting the interaction of pre-tRNA with splicing endonuclease. In Sclerotinia sclerotiorum (strain ATCC 18683 / 1980 / Ss-1) (White mold), this protein is Exportin-T (los1).